A 190-amino-acid polypeptide reads, in one-letter code: dCTP deaminase (190 aa).

113-118 (KSTYAR) serves as a coordination point for dCTP. E139 serves as the catalytic Proton donor/acceptor. DCTP contacts are provided by Q158, Y172, K181, and Q182.

This sequence belongs to the dCTP deaminase family. As to quaternary structure, homotrimer.

The enzyme catalyses dCTP + H2O + H(+) = dUTP + NH4(+). The protein operates within pyrimidine metabolism; dUMP biosynthesis; dUMP from dCTP (dUTP route): step 1/2. Its function is as follows. Catalyzes the deamination of dCTP to dUTP. This chain is dCTP deaminase, found in Chlamydia abortus (strain DSM 27085 / S26/3) (Chlamydophila abortus).